A 79-amino-acid polypeptide reads, in one-letter code: Sulfur carrier protein TusA (79 aa).

Catalysis depends on Cys17, which acts as the Cysteine persulfide intermediate.

This sequence belongs to the sulfur carrier protein TusA family.

It localises to the cytoplasm. Sulfur carrier protein which probably makes part of a sulfur-relay system. In Actinobacillus pleuropneumoniae serotype 5b (strain L20), this protein is Sulfur carrier protein TusA.